Here is a 560-residue protein sequence, read N- to C-terminus: MYSKLKTEINESIKEALTKLRIKYDDEIILEEPPNPSMGDMSTNIAFSLASKLKKSPVEIAQEIKENIKLPLYFEKVETKGPYINFYINYTLFTTKVVNYIDKNYGELPEKDERILLEHTSANPNGPLHVGHLRNAILGDSLKRILQHAGYKVEAQYYVNDMGRQIAIIVWGMDKFNYTVDDDKKADHAIGEVYYKCNQQLEANPEYNQEIDDILRKYEEGTDAALIDAFQGVVEYCIDGIKETLKDLNIKMNLFKWESTFLRNGSVDDVLEKLQPFTIQKDILYLPLERYNVDKELVLRRSNGTSLYATRDLAYHQYKTKNSDISLDILGADHKLAAKQLGLALELSNNRAPEVVFYEFIDLPEGSMSTRKGVFISVDEFIEQSVEHAKEELIRRDLDLTEKQIEEVSKIVGVGSIRFYINQISPEKPITFKWEEALSFERGCASIQYAHARACKLLAKSDYNEFEEVRCDYELDDEEKDLIKTLSQFTEVICQSAQERRVHHLAQYTLSLSKAFNKFYKSKQVIGSEHEKLRLKLVDASRITLKNSLKLLGIKSPEFM.

Residues 122-132 (ANPNGPLHVGH) carry the 'HIGH' region motif.

This sequence belongs to the class-I aminoacyl-tRNA synthetase family.

Its subcellular location is the cytoplasm. The enzyme catalyses tRNA(Arg) + L-arginine + ATP = L-arginyl-tRNA(Arg) + AMP + diphosphate. This is Arginine--tRNA ligase from Methanosphaera stadtmanae (strain ATCC 43021 / DSM 3091 / JCM 11832 / MCB-3).